Here is a 138-residue protein sequence, read N- to C-terminus: Large ribosomal subunit protein eL32 (138 aa).

It belongs to the eukaryotic ribosomal protein eL32 family.

The sequence is that of Large ribosomal subunit protein eL32 from Saccharolobus islandicus (strain Y.N.15.51 / Yellowstone #2) (Sulfolobus islandicus).